A 120-amino-acid chain; its full sequence is Large ribosomal subunit protein uL18 (120 aa).

This sequence belongs to the universal ribosomal protein uL18 family. As to quaternary structure, part of the 50S ribosomal subunit; part of the 5S rRNA/L5/L18/L25 subcomplex. Contacts the 5S and 23S rRNAs.

Its function is as follows. This is one of the proteins that bind and probably mediate the attachment of the 5S RNA into the large ribosomal subunit, where it forms part of the central protuberance. This is Large ribosomal subunit protein uL18 from Bacillus cereus (strain ATCC 10987 / NRS 248).